The chain runs to 378 residues: Schlafen family member 2 (378 aa).

Belongs to the Schlafen family. As to expression, mainly expressed in the thymus, lymph node and spleen.

The protein resides in the cytoplasm. TRNA-binding protein involved in T-cell mediated immunity. Plays a key role during the metabolic reprograming phase of activated T-cell, when T-cells produce reactive oxygen species (ROS): acts by binding tRNAs and protecting them from cleavage by the oxidative stress-activated ribonuclease angiogenin (ANG). Also required for T-cell quiescence maintenance. In Mus musculus (Mouse), this protein is Schlafen family member 2.